The following is a 173-amino-acid chain: Photosystem I assembly protein Ycf3 (173 aa).

TPR repeat units follow at residues 35-68 (AYVY…EESP), 72-105 (SETL…NSNQ), and 120-153 (GRTA…YPGG).

This sequence belongs to the Ycf3 family.

The protein resides in the cellular thylakoid membrane. Essential for the assembly of the photosystem I (PSI) complex. May act as a chaperone-like factor to guide the assembly of the PSI subunits. This chain is Photosystem I assembly protein Ycf3, found in Prochlorococcus marinus (strain MIT 9303).